A 199-amino-acid polypeptide reads, in one-letter code: Recombination protein RecR (199 aa).

Residues Cys-57–Cys-72 form a C4-type zinc finger. The region spanning Gly-81–Pro-176 is the Toprim domain.

This sequence belongs to the RecR family.

Functionally, may play a role in DNA repair. It seems to be involved in an RecBC-independent recombinational process of DNA repair. It may act with RecF and RecO. This chain is Recombination protein RecR, found in Vibrio parahaemolyticus serotype O3:K6 (strain RIMD 2210633).